Reading from the N-terminus, the 449-residue chain is C4-dicarboxylate transport protein (449 aa).

Positions 1–20 (MSALTESFGPVPSAKSKPPA) are disordered. Residues 10–20 (PVPSAKSKPPA) show a composition bias toward low complexity. 8 helical membrane passes run 28-48 (LLYL…WLSP), 66-86 (LIKM…IAHI), 101-121 (LYFE…GNVV), 167-187 (GDIL…MTLG), 205-225 (FGVI…AMAF), 241-261 (LIAV…GLIA), 326-346 (IYMT…LTWT), and 370-390 (FITL…GMAI).

The protein belongs to the dicarboxylate/amino acid:cation symporter (DAACS) (TC 2.A.23) family.

It localises to the cell inner membrane. Responsible for the transport of dicarboxylates such as succinate, fumarate, and malate from the periplasm across the membrane. In Rhodopseudomonas palustris (strain BisB18), this protein is C4-dicarboxylate transport protein.